The following is a 979-amino-acid chain: Glycine dehydrogenase (decarboxylating) (979 aa).

N6-(pyridoxal phosphate)lysine is present on lysine 724.

The protein belongs to the GcvP family. In terms of assembly, the glycine cleavage system is composed of four proteins: P, T, L and H. Requires pyridoxal 5'-phosphate as cofactor.

It catalyses the reaction N(6)-[(R)-lipoyl]-L-lysyl-[glycine-cleavage complex H protein] + glycine + H(+) = N(6)-[(R)-S(8)-aminomethyldihydrolipoyl]-L-lysyl-[glycine-cleavage complex H protein] + CO2. Functionally, the glycine cleavage system catalyzes the degradation of glycine. The P protein binds the alpha-amino group of glycine through its pyridoxal phosphate cofactor; CO(2) is released and the remaining methylamine moiety is then transferred to the lipoamide cofactor of the H protein. This Nostoc punctiforme (strain ATCC 29133 / PCC 73102) protein is Glycine dehydrogenase (decarboxylating).